The primary structure comprises 100 residues: Large ribosomal subunit protein uL23 (100 aa).

It belongs to the universal ribosomal protein uL23 family. Part of the 50S ribosomal subunit. Contacts protein L29, and trigger factor when it is bound to the ribosome.

In terms of biological role, one of the early assembly proteins it binds 23S rRNA. One of the proteins that surrounds the polypeptide exit tunnel on the outside of the ribosome. Forms the main docking site for trigger factor binding to the ribosome. This chain is Large ribosomal subunit protein uL23, found in Colwellia psychrerythraea (strain 34H / ATCC BAA-681) (Vibrio psychroerythus).